A 208-amino-acid chain; its full sequence is 3-demethoxyubiquinol 3-hydroxylase (208 aa).

Fe cation contacts are provided by Glu57, Glu87, His90, Glu139, Glu171, and His174.

It belongs to the COQ7 family. Requires Fe cation as cofactor.

It localises to the cell membrane. It catalyses the reaction a 5-methoxy-2-methyl-3-(all-trans-polyprenyl)benzene-1,4-diol + AH2 + O2 = a 3-demethylubiquinol + A + H2O. It participates in cofactor biosynthesis; ubiquinone biosynthesis. Catalyzes the hydroxylation of 2-nonaprenyl-3-methyl-6-methoxy-1,4-benzoquinol during ubiquinone biosynthesis. This is 3-demethoxyubiquinol 3-hydroxylase from Burkholderia vietnamiensis (strain G4 / LMG 22486) (Burkholderia cepacia (strain R1808)).